Here is a 475-residue protein sequence, read N- to C-terminus: Glutamate--tRNA ligase (475 aa).

The short motif at 11 to 21 (PSPTGFLHIGG) is the 'HIGH' region element. Positions 240-244 (KLSKR) match the 'KMSKS' region motif. K243 contributes to the ATP binding site.

The protein belongs to the class-I aminoacyl-tRNA synthetase family. Glutamate--tRNA ligase type 1 subfamily. Monomer.

The protein resides in the cytoplasm. It carries out the reaction tRNA(Glu) + L-glutamate + ATP = L-glutamyl-tRNA(Glu) + AMP + diphosphate. Catalyzes the attachment of glutamate to tRNA(Glu) in a two-step reaction: glutamate is first activated by ATP to form Glu-AMP and then transferred to the acceptor end of tRNA(Glu). This chain is Glutamate--tRNA ligase, found in Bradyrhizobium diazoefficiens (strain JCM 10833 / BCRC 13528 / IAM 13628 / NBRC 14792 / USDA 110).